Reading from the N-terminus, the 916-residue chain is MTAGAGVLLLLLSLSGALRAHNEDLTTRETCKAGFSEDDYTALISQNILEGEKLLQVKFSSCVGTKGTQYETNSMDFKVGADGTVFATRELQVPSEQVAFTVTAWDSQTAEKWDAVVRLLVAQTSSPHSGHKPQKGKKVVALDPSPPPKDTLLPWPQHQNANGLRRRKRDWVIPPINVPENSRGPFPQQLVRIRSDKDNDIPIRYSITGVGADQPPMEVFSIDSMSGRMYVTRPMDREEHASYHLRAHAVDMNGNKVENPIDLYIYVIDMNDNRPEFINQVYNGSVDEGSKPGTYVMTVTANDADDSTTANGMVRYRIVTQTPQSPSQNMFTINSETGDIVTVAAGLDREKVQQYTVIVQATDMEGNLNYGLSNTATAIITVTDVNDNPPEFTASTFAGEVPENRVETVVANLTVMDRDQPHSPNWNAVYRIISGDPSGHFSVRTDPVTNEGMVTVVKAVDYELNRAFMLTVMVSNQAPLASGIQMSFQSTAGVTISIMDINEAPYFPSNHKLIRLEEGVPPGTVLTTFSAVDPDRFMQQAVRYSKLSDPASWLHINATNGQITTAAVLDRESLYTKNNVYEATFLAADNGIPPASGTGTLQIYLIDINDNAPELLPKEAQICEKPNLNAINITAADADVDPNIGPYVFELPFVPAAVRKNWTITRLNGDYAQLSLRILYLEAGMYDVPIIVTDSGNPPLSNTSIIKVKVCPCDDNGDCTTIGAVAAAGLGTGAIVAILICILILLTMVLLFVMWMKRREKERHTKQLLIDPEDDVRDNILKYDEEGGGEEDQDYDLSQLQQPEAMGHVPSKAPGVRRVDERPVGAEPQYPIRPMVPHPGDIGDFINEGLRAADNDPTAPPYDSLLVFDYEGSGSTAGSVSSLNSSSSGDQDYDYLNDWGPRFKKLADMYGGGEED.

A signal peptide spans Met-1–Ala-20. Positions His-21–Arg-169 are excised as a propeptide. The interval Thr-124 to Lys-168 is disordered. Residues Ser-129 to Lys-138 are compositionally biased toward basic residues. Cadherin domains follow at residues Asp-170–Phe-277, Ile-278–Phe-392, Thr-393–Phe-507, Pro-508–Pro-613, and Glu-614–Ala-724. Topologically, residues Asp-170–Ala-734 are extracellular. Residues Asn-283, Asn-412, Asn-557, Asn-632, Asn-661, and Asn-702 are each glycosylated (N-linked (GlcNAc...) asparagine). Residues Ile-735–Met-756 traverse the membrane as a helical segment. The Cytoplasmic segment spans residues Lys-757–Asp-916. The tract at residues Met-806–His-838 is disordered.

As to expression, expressed mainly in brain but also found in other tissues.

It is found in the cell membrane. Functionally, cadherins are calcium-dependent cell adhesion proteins. They preferentially interact with themselves in a homophilic manner in connecting cells; cadherins may thus contribute to the sorting of heterogeneous cell types. May play an important role in retinal development. The chain is Cadherin-4 (CDH4) from Homo sapiens (Human).